The primary structure comprises 457 residues: Serine--tRNA ligase (457 aa).

Position 252-254 (252-254 (TAE)) interacts with L-serine. ATP is bound by residues 283-285 (RKE) and Val299. Glu306 contributes to the L-serine binding site. ATP is bound at residue 370–373 (EVVS). Thr406 serves as a coordination point for L-serine.

Belongs to the class-II aminoacyl-tRNA synthetase family. Type-1 seryl-tRNA synthetase subfamily. In terms of assembly, homodimer. The tRNA molecule binds across the dimer.

It is found in the cytoplasm. It catalyses the reaction tRNA(Ser) + L-serine + ATP = L-seryl-tRNA(Ser) + AMP + diphosphate + H(+). The enzyme catalyses tRNA(Sec) + L-serine + ATP = L-seryl-tRNA(Sec) + AMP + diphosphate + H(+). The protein operates within aminoacyl-tRNA biosynthesis; selenocysteinyl-tRNA(Sec) biosynthesis; L-seryl-tRNA(Sec) from L-serine and tRNA(Sec): step 1/1. Catalyzes the attachment of serine to tRNA(Ser). Is also able to aminoacylate tRNA(Sec) with serine, to form the misacylated tRNA L-seryl-tRNA(Sec), which will be further converted into selenocysteinyl-tRNA(Sec). The protein is Serine--tRNA ligase of Thermococcus onnurineus (strain NA1).